A 422-amino-acid polypeptide reads, in one-letter code: Metallocarboxypeptidase A (422 aa).

Positions 1–17 (MRSVLSLALLAANVVTA) are cleaved as a signal peptide. Positions 18-112 (AVVSPFDYSG…FEAYSAGYAP (95 aa)) are cleaved as a propeptide — activation peptide. The Peptidase M14 domain occupies 119–419 (SYHSYQDHIS…AGTVAMLKAV (301 aa)). Residues H179 and E182 each contribute to the Zn(2+) site. Substrate contacts are provided by residues 179–182 (HARE), R237, and 254–255 (NR). An intrachain disulfide couples C248 to C271. Position 309 (H309) interacts with Zn(2+). Residue 310–311 (SY) participates in substrate binding. The active-site Proton donor/acceptor is E385.

The protein belongs to the peptidase M14 family. The cofactor is Zn(2+).

Its subcellular location is the secreted. In terms of biological role, extracellular metalloprotease that contributes to pathogenicity. The sequence is that of Metallocarboxypeptidase A (MCPA) from Trichophyton equinum (Horse ringworm fungus).